The primary structure comprises 141 residues: Hemoglobin D subunit alpha (141 aa).

The Globin domain occupies 1–141; sequence MLTEDDKQLI…VSAVLAEKYR (141 aa). An O2-binding site is contributed by His-58. A heme b-binding site is contributed by His-87.

It belongs to the globin family. As to quaternary structure, tetramer of two alpha chains and two beta chains. As to expression, red blood cells.

Its function is as follows. Involved in oxygen transport from the lung to the various peripheral tissues. This chain is Hemoglobin D subunit alpha, found in Aldabrachelys gigantea (Aldabra giant tortoise).